A 295-amino-acid chain; its full sequence is ATP synthase gamma chain (295 aa).

This sequence belongs to the ATPase gamma chain family. F-type ATPases have 2 components, CF(1) - the catalytic core - and CF(0) - the membrane proton channel. CF(1) has five subunits: alpha(3), beta(3), gamma(1), delta(1), epsilon(1). CF(0) has three main subunits: a, b and c.

It is found in the cell membrane. Functionally, produces ATP from ADP in the presence of a proton gradient across the membrane. The gamma chain is believed to be important in regulating ATPase activity and the flow of protons through the CF(0) complex. The polypeptide is ATP synthase gamma chain (Herpetosiphon aurantiacus (strain ATCC 23779 / DSM 785 / 114-95)).